A 285-amino-acid chain; its full sequence is Pantothenate synthetase (285 aa).

Residue 30–37 (MGNLHDGH) participates in ATP binding. The active-site Proton donor is the His-37. Gln-61 lines the (R)-pantoate pocket. Gln-61 lines the beta-alanine pocket. Position 149–152 (149–152 (GEKD)) interacts with ATP. Gln-155 lines the (R)-pantoate pocket. Residues Ile-178 and 186-189 (LSSR) each bind ATP.

Belongs to the pantothenate synthetase family. As to quaternary structure, homodimer.

It is found in the cytoplasm. It carries out the reaction (R)-pantoate + beta-alanine + ATP = (R)-pantothenate + AMP + diphosphate + H(+). It participates in cofactor biosynthesis; (R)-pantothenate biosynthesis; (R)-pantothenate from (R)-pantoate and beta-alanine: step 1/1. Catalyzes the condensation of pantoate with beta-alanine in an ATP-dependent reaction via a pantoyl-adenylate intermediate. In Buchnera aphidicola subsp. Acyrthosiphon pisum (strain Tuc7), this protein is Pantothenate synthetase.